Here is a 412-residue protein sequence, read N- to C-terminus: Subtilisin-like protease 6 (412 aa).

Residues 1-20 (MGFITKAIPIVLAALSTVNG) form the signal peptide. Residues 21-127 (ARILEAGPHA…VRATTNGTNL (107 aa)) constitute a propeptide that is removed on maturation. The Inhibitor I9 domain occupies 36–120 (KYIVVMKKDV…FIEPDFVVRA (85 aa)). The region spanning 135 to 412 (SWGLARVSTR…SKLIYNGSGK (278 aa)) is the Peptidase S8 domain. Residues Asp167 and His198 each act as charge relay system in the active site. N-linked (GlcNAc...) asparagine glycosylation is found at Asn252, Asn264, and Asn325. The Charge relay system role is filled by Ser358. Asn408 is a glycosylation site (N-linked (GlcNAc...) asparagine).

This sequence belongs to the peptidase S8 family.

The protein localises to the secreted. Functionally, secreted subtilisin-like serine protease with keratinolytic activity that contributes to pathogenicity. The protein is Subtilisin-like protease 6 (SUB6) of Trichophyton verrucosum (strain HKI 0517).